Consider the following 318-residue polypeptide: Thiohydrolase aneE (318 aa).

The protein belongs to the polyketide transferase af380 family.

It catalyses the reaction aculene D + L-prolyl-[peptidyl-carrier protein] = aculene B + holo-[peptidyl-carrier protein]. The enzyme catalyses aculene C + L-prolyl-[peptidyl-carrier protein] = aculene A + holo-[peptidyl-carrier protein]. Its pathway is secondary metabolite biosynthesis. Its function is as follows. Thiohydrolase; part of the gene cluster that mediates the biosynthesis of aculenes, a unique type of norsesquiterpenes that contain a nordaucane skeleton linked to an L-proline moiety and are of mixed biosynthetic origin. The pathway begins with the synthesis of dauca-4,7-diene by the terpene cyclase aneC using farnesyl pyrophosphate (FPP) as substrate. The cytochrome P450 monooxygenase aneF then performs the initial oxidation at C-12 of dauca-4,7-diene to yield asperaculane D. Asperaculane D is substrate of the cytochrome P450 monooxygenase aneD for C-10 hydroxylation to yield asperaculane E. The cytochrome P450 monooxygenase aneG then converts asperaculane E into aculene D via C-2 oxidation. The monomodular nonribosomal peptide synthtase aneB adenylates L-proline and the thiohydrolase aneE transfers this activated L-proline derivative to aculenes D and C to produce respectively aculenes B and A. The dioxygenase aneA converts aculene D into aculene C, and aculene B into aculene A by introducing the 5,6-alkene moiety. Asperculanes A, B, C and F, as well as 14-prolyl asperculane C, might be shunt products of the pathway. In Aspergillus aculeatus (strain ATCC 16872 / CBS 172.66 / WB 5094), this protein is Thiohydrolase aneE.